Consider the following 407-residue polypeptide: Arginine biosynthesis bifunctional protein ArgJ (407 aa).

Positions 157, 183, 194, 280, 402, and 407 each coordinate substrate. Catalysis depends on T194, which acts as the Nucleophile.

The protein belongs to the ArgJ family. As to quaternary structure, heterotetramer of two alpha and two beta chains.

Its subcellular location is the cytoplasm. The catalysed reaction is N(2)-acetyl-L-ornithine + L-glutamate = N-acetyl-L-glutamate + L-ornithine. It catalyses the reaction L-glutamate + acetyl-CoA = N-acetyl-L-glutamate + CoA + H(+). It participates in amino-acid biosynthesis; L-arginine biosynthesis; L-ornithine and N-acetyl-L-glutamate from L-glutamate and N(2)-acetyl-L-ornithine (cyclic): step 1/1. Its pathway is amino-acid biosynthesis; L-arginine biosynthesis; N(2)-acetyl-L-ornithine from L-glutamate: step 1/4. Functionally, catalyzes two activities which are involved in the cyclic version of arginine biosynthesis: the synthesis of N-acetylglutamate from glutamate and acetyl-CoA as the acetyl donor, and of ornithine by transacetylation between N(2)-acetylornithine and glutamate. The chain is Arginine biosynthesis bifunctional protein ArgJ from Bacillus cereus (strain ATCC 10987 / NRS 248).